Here is a 270-residue protein sequence, read N- to C-terminus: Formamidopyrimidine-DNA glycosylase (270 aa).

The active-site Schiff-base intermediate with DNA is the proline 2. The active-site Proton donor is the glutamate 3. Lysine 58 functions as the Proton donor; for beta-elimination activity in the catalytic mechanism. DNA-binding residues include histidine 90, arginine 109, and arginine 152. The segment at 237 to 270 (RVYGREGEACECGGAIVRVVQSGRSTFYCRKCQR) adopts an FPG-type zinc-finger fold. The active-site Proton donor; for delta-elimination activity is arginine 260.

It belongs to the FPG family. Monomer. Requires Zn(2+) as cofactor.

The enzyme catalyses Hydrolysis of DNA containing ring-opened 7-methylguanine residues, releasing 2,6-diamino-4-hydroxy-5-(N-methyl)formamidopyrimidine.. The catalysed reaction is 2'-deoxyribonucleotide-(2'-deoxyribose 5'-phosphate)-2'-deoxyribonucleotide-DNA = a 3'-end 2'-deoxyribonucleotide-(2,3-dehydro-2,3-deoxyribose 5'-phosphate)-DNA + a 5'-end 5'-phospho-2'-deoxyribonucleoside-DNA + H(+). In terms of biological role, involved in base excision repair of DNA damaged by oxidation or by mutagenic agents. Acts as a DNA glycosylase that recognizes and removes damaged bases. Has a preference for oxidized purines, such as 7,8-dihydro-8-oxoguanine (8-oxoG). Has AP (apurinic/apyrimidinic) lyase activity and introduces nicks in the DNA strand. Cleaves the DNA backbone by beta-delta elimination to generate a single-strand break at the site of the removed base with both 3'- and 5'-phosphates. The chain is Formamidopyrimidine-DNA glycosylase from Sphingopyxis alaskensis (strain DSM 13593 / LMG 18877 / RB2256) (Sphingomonas alaskensis).